Here is a 65-residue protein sequence, read N- to C-terminus: Large ribosomal subunit protein bL35 (65 aa).

Belongs to the bacterial ribosomal protein bL35 family.

This chain is Large ribosomal subunit protein bL35, found in Clostridium kluyveri (strain NBRC 12016).